A 278-amino-acid chain; its full sequence is Small ribosomal subunit protein uS2 (278 aa).

2 disordered regions span residues 216–235 (EAAAAAKEAEDDTGYTTQWD) and 250–278 (NFAAAPADGNWGATTGGDWAAAGGEEWTN). Residues 256–278 (ADGNWGATTGGDWAAAGGEEWTN) show a composition bias toward low complexity.

It belongs to the universal ribosomal protein uS2 family. In terms of assembly, component of the small ribosomal subunit. Mature ribosomes consist of a small (40S) and a large (60S) subunit. The 40S subunit contains about 33 different proteins and 1 molecule of RNA (18S). The 60S subunit contains about 49 different proteins and 3 molecules of RNA (25S, 5.8S and 5S). Interacts with ribosomal protein S21.

Its subcellular location is the cytoplasm. In terms of biological role, required for the assembly and/or stability of the 40S ribosomal subunit. Required for the processing of the 20S rRNA-precursor to mature 18S rRNA in a late step of the maturation of 40S ribosomal subunits. This is Small ribosomal subunit protein uS2 from Monosiga brevicollis (Choanoflagellate).